The sequence spans 256 residues: Thiazole synthase (256 aa).

Lysine 96 serves as the catalytic Schiff-base intermediate with DXP. 1-deoxy-D-xylulose 5-phosphate is bound by residues glycine 157, 183 to 184 (AG), and 205 to 206 (NT).

The protein belongs to the ThiG family. In terms of assembly, homotetramer. Forms heterodimers with either ThiH or ThiS.

It localises to the cytoplasm. It carries out the reaction [ThiS sulfur-carrier protein]-C-terminal-Gly-aminoethanethioate + 2-iminoacetate + 1-deoxy-D-xylulose 5-phosphate = [ThiS sulfur-carrier protein]-C-terminal Gly-Gly + 2-[(2R,5Z)-2-carboxy-4-methylthiazol-5(2H)-ylidene]ethyl phosphate + 2 H2O + H(+). It participates in cofactor biosynthesis; thiamine diphosphate biosynthesis. Catalyzes the rearrangement of 1-deoxy-D-xylulose 5-phosphate (DXP) to produce the thiazole phosphate moiety of thiamine. Sulfur is provided by the thiocarboxylate moiety of the carrier protein ThiS. In vitro, sulfur can be provided by H(2)S. The protein is Thiazole synthase of Bacillus cereus (strain 03BB102).